Here is a 1021-residue protein sequence, read N- to C-terminus: Sodium/potassium-transporting ATPase subunit alpha-1 (1021 aa).

A propeptide spanning residues 1 to 5 (MGKGV) is cleaved from the precursor. Positions 1-11 (MGKGVGRDKYE) are enriched in basic and acidic residues. Residues 1–36 (MGKGVGRDKYEPAAVSEHGDKKKAKKERDMDELKKE) are disordered. Residues 6-85 (GRDKYEPAAV…NALTPPPTTP (80 aa)) lie on the Cytoplasmic side of the membrane. Lys-9 carries the N6-acetyllysine modification. Phosphotyrosine is present on Tyr-10. Residue Ser-16 is modified to Phosphoserine; by PKC. Lys-21 carries the N6-acetyllysine modification. Residues 26–36 (KERDMDELKKE) are compositionally biased toward basic and acidic residues. 2 positions are modified to phosphoserine: Ser-38 and Ser-45. Residues 80–82 (PPP) form a phosphoinositide-3 kinase binding region. The helical transmembrane segment at 86-106 (EWVKFCRQLFGGFSMLLWIGA) threads the bilayer. The Extracellular portion of the chain corresponds to 107-129 (VLCFLAYGIQAATEEEPQNDNLY). The helical transmembrane segment at 130–150 (LGVVLSAVVIITGCFSYYQEA) threads the bilayer. Residues 151–286 (KSSKIMESFK…GGQTPIAAEI (136 aa)) are Cytoplasmic-facing. Ser-226 bears the Phosphoserine mark. Phosphotyrosine is present on Tyr-258. The helical transmembrane segment at 287 to 306 (EHFIHIITGVAVFLGVSFFI) threads the bilayer. The Extracellular portion of the chain corresponds to 307–318 (LSLILEYTWLEA). Residues 319–336 (VIFLIGIIVANVPEGLLA) form a helical membrane-spanning segment. Topologically, residues 337–770 (TVTVCLTLTA…EEGRLIFDNL (434 aa)) are cytoplasmic. Asp-374 serves as the catalytic 4-aspartylphosphate intermediate. Residues Ser-450 and Ser-482 each carry the phosphoserine modification. Lys-485 contacts ATP. A Phosphotyrosine modification is found at Tyr-540. The interval 594–715 (RAAVPDAVGK…QGAIVAVTGD (122 aa)) is mediates interaction with SCN7A. Phosphoserine is present on Ser-666. Mg(2+)-binding residues include Asp-715 and Asp-719. A helical membrane pass occupies residues 771 to 790 (KKSIAYTLTSNIPEITPFLI). At 791-800 (FIIANIPLPL) the chain is on the extracellular side. The chain crosses the membrane as a helical span at residues 801-821 (GTVTILCIDLGTDMVPAISLA). Over 822 to 841 (YEQAESDIMKRQPRNPQTDK) the chain is Cytoplasmic. A helical membrane pass occupies residues 842-864 (LVNERLISMAYGQIGMIQALGGF). The Extracellular portion of the chain corresponds to 865 to 916 (FTYFVIMAENGFLPNHLLGIRVTWDDRWINDVEDSYGQQWTYEQRKIVEFTC). Residues 917–936 (HTAFFVSIVVVQWADLVICK) form a helical membrane-spanning segment. The Cytoplasmic portion of the chain corresponds to 937–949 (TRRNSVFQQGMKN). Ser-941 carries the post-translational modification Phosphoserine; by PKA. The chain crosses the membrane as a helical span at residues 950–968 (KILIFGLFEETALAAFLSY). The Extracellular portion of the chain corresponds to 969–983 (CPGMGVALRMYPLKP). A helical membrane pass occupies residues 984–1004 (TWWFCAFPYSLLIFVYDEVRK). Residues 1005–1021 (LIIRRRPGGWVEKETYY) lie on the Cytoplasmic side of the membrane.

The protein belongs to the cation transport ATPase (P-type) (TC 3.A.3) family. Type IIC subfamily. In terms of assembly, the sodium/potassium-transporting ATPase is composed of a catalytic alpha subunit, an auxiliary non-catalytic beta subunit and an additional regulatory subunit. Interacts with regulatory subunit FXYD1. Interacts with regulatory subunit FXYD3. Interacts with SIK1. Interacts with SLC35G1 and STIM1. Interacts with CLN3; this interaction regulates the sodium/potassium-transporting ATPase complex localization at the plasma membrane. Interacts with SCN7A; activates ATP1A1 P-type sodium:potassium-exchanging transporter activity which indirectly signals to nearby neurons to regulate sodium homeostasis. Phosphorylation on Tyr-10 modulates pumping activity. Phosphorylation of Ser-941 by PKA modulates the response of ATP1A1 to PKC. Dephosphorylation by protein phosphatase 2A (PP2A) following increases in intracellular sodium, leading to increase catalytic activity.

It localises to the cell membrane. The protein resides in the basolateral cell membrane. It is found in the sarcolemma. The protein localises to the cell projection. Its subcellular location is the axon. It localises to the melanosome. It catalyses the reaction K(+)(out) + Na(+)(in) + ATP + H2O = K(+)(in) + Na(+)(out) + ADP + phosphate + H(+). Functionally, this is the catalytic component of the active enzyme, which catalyzes the hydrolysis of ATP coupled with the exchange of sodium and potassium ions across the plasma membrane. This action creates the electrochemical gradient of sodium and potassium ions, providing the energy for active transport of various nutrients. Could also be part of an osmosensory signaling pathway that senses body-fluid sodium levels and controls salt intake behavior as well as voluntary water intake to regulate sodium homeostasis. In Bos taurus (Bovine), this protein is Sodium/potassium-transporting ATPase subunit alpha-1 (ATP1A1).